Consider the following 160-residue polypeptide: Leucokinin (160 aa).

A signal peptide spans 1-19 (MAKIVLCMVLLAFGRQVYG). A propeptide spanning residues 20-130 (ASLVPAPISE…RIKSQLQRDE (111 aa)) is cleaved from the precursor. Residue G147 is modified to Glycine amide. A propeptide spanning residues 151–160 (SPEPPILPDY) is cleaved from the precursor.

The protein resides in the secreted. Functionally, acts through intracellular calcium in Malpighian tubule stellate cells to raise chloride conductance. The chain is Leucokinin (Lk) from Drosophila melanogaster (Fruit fly).